The sequence spans 893 residues: Dystroglycan 1 (893 aa).

A signal peptide spans 1–27 (MSVDNWLLHPLWGQTFLLLLSVAVAQA). Residues 28-406 (HWPSEPSEAV…GQIRPTLTIP (379 aa)) are required for laminin recognition. Residues 47–69 (SMHSVLSDFQEAVPTVVGIPDGT) are O-glycosylated at one site. Residue Asn139 is glycosylated (N-linked (GlcNAc...) asparagine). Cys180 and Cys262 are oxidised to a cystine. Residues 314–483 (ATPTPVTAIG…PPTRIRTTTS (170 aa)) are mucin-like domain. O-linked (Man6P...) threonine glycosylation is found at Thr315, Thr317, and Thr377. The segment at 379 to 498 (TLGPIQPTRV…GEPNQRPELK (120 aa)) is disordered. Over residues 409 to 445 (VEPTAVITPPTTTTKKPRVSTPKPATPSTDSSTTTTR) the composition is skewed to low complexity. The segment at 461-483 (TTKAPITRLETASPPTRIRTTTS) is O-glycosylated at seven sites with GalNAc. The 110-residue stretch at 601–710 (KAPARFKARL…LSIAVTGSGS (110 aa)) folds into the Peptidase S72 domain. N-linked (GlcNAc...) asparagine glycans are attached at residues Asn639, Asn647, and Asn659. At 652–751 (SIVVEWTNNT…SSEDDVYLHT (100 aa)) the chain is on the extracellular side. Cys667 and Cys711 are oxidised to a cystine. The interval 722–744 (PSPGSSAAPATEVPDRDPEKSSE) is disordered. The segment covering 734-744 (VPDRDPEKSSE) has biased composition (basic and acidic residues). A helical membrane pass occupies residues 752–772 (VIPAVVVAAILLIAGIIAMIC). Over 773 to 893 (YRKKRKGKLT…YRSPPPYVPP (121 aa)) the chain is Cytoplasmic. The Nuclear localization signal signature appears at 774-780 (RKKRKGK). Thr788 carries the phosphothreonine modification. Positions 817–893 (LQEEKAPLPP…YRSPPPYVPP (77 aa)) are required for interaction with CAV3. The interval 821-893 (KAPLPPPEYP…YRSPPPYVPP (73 aa)) is disordered. Positions 830–844 (PNQSMPETTPLNQDT) are enriched in polar residues. The segment covering 857 to 868 (NAPPYQPPPPFT) has biased composition (pro residues). A required for binding DMD and UTRN region spans residues 878–893 (PKNMTPYRSPPPYVPP). A PPXY motif motif is present at residues 887-890 (PPPY). Tyr890 bears the Phosphotyrosine; by SRC mark.

In terms of assembly, monomer. Heterodimer of alpha- and beta-dystroglycan subunits which are the central components of the dystrophin-glycoprotein complex. This complex then can form a dystrophin-associated glycoprotein complex (DGC) which is composed of three subcomplexes: a cytoplasmic complex comprised of DMD (or UTRN), DTNA and a number of syntrophins, such as SNTB1, SNTB2, SNTG1 and SNTG2, the transmembrane dystroglycan complex, and the sarcoglycan-sarcospan complex. Interacts (via the N-terminal of alphaDAG1) with LARGE1; the interaction enhances laminin binding. Interacts with SGCD. Interacts with AGR2 and AGR3. Interacts (betaDAG1) with DMD; the interaction is inhibited by phosphorylation on the PPXY motif. Interacts (betaDAG1, via its PPXY motif) with UTRN (via its WWW and ZZ domains); the interaction is inhibited by phosphorylation on the PPXY motif. Interacts (betaDAG1, via its phosphorylated PPXY motif) with the SH2 domain-containing proteins, FYN, CSK, NCK and SHC. Interacts (betaDAG1) with CAV3 (via a central WW-like domain); the interaction disrupts the binding of DMD. BetaDAG1 directly interacts with ANK3, but not with ANK2; this interaction does not interfere with DMD-binding and is required for retention at costameres. Identified in a dystroglycan complex that contains at least PRX, DRP2, UTRN, DMD and DAG1. Interacts with POMGNT1. BetaDAG1 interacts with CD93. In terms of processing, O-glycosylated. POMGNT1 catalyzes the initial addition of N-acetylglucosamine, giving rise to the GlcNAc(beta1-2)Man(alpha1-)O-Ser/Thr moiety and thus providing the necessary basis for the addition of further carbohydrate moieties. Heavily O-glycosylated comprising of up to two thirds of its mass and the carbohydrate composition differs depending on tissue type. Mucin-type O-glycosylation is important for ligand binding activity. O-mannosylation is found in high abundance in both brain and muscle where the most abundant glycan is Sia-alpha-2-3-Gal-beta-1-4-Glc-NAc-beta-1-2-Man. In muscle, glycosylation on Thr-315, Thr-317, Thr-379 by a phosphorylated O-mannosyl glycan with the structure 2-(N-acetylamido)-2-deoxygalactosyl-beta-1,3-2-(N-acetylamido)-2-deoxyglucosyl-beta-1,4-6-phosphomannose is mediated by like-acetylglucosaminyltransferase (LARGE1) protein amd is required for laminin binding. O-glycosylated in the N-terminal region with a core 1 or possibly core 8 glycan. The brain form displays a unique glycosylation pattern which is absent in other tissues; this form shows enhanced binding to laminin LAMA5 compared to the skeletal muscle form. N-glycosylated. Post-translationally, autolytic cleavage produces the alpha and beta subunits. In cutaneous cells, as well as in certain pathological conditions, shedding of beta-dystroglycan can occur releasing a peptide of about 30 kDa. In terms of processing, SRC-mediated phosphorylation of the PPXY motif of the beta subunit recruits SH2 domain-containing proteins, but inhibits binding to WWW domain-containing proteins, DMD and UTRN. This phosphorylation also inhibits nuclear entry. As to expression, detected in brain and kidney (at protein level). Detected in sciatic nerve (at protein level). Expressed in neurons and muscle cells (at protein level). Expressed in a variety of tissues. In brain, expressed in the hippocampal formation, the olfactory bulb, the cerebellum and the thalamus. In the peripheral nerve system, expressed in Schwann cells.

It localises to the secreted. Its subcellular location is the extracellular space. The protein resides in the cell membrane. It is found in the cytoplasm. The protein localises to the cytoskeleton. It localises to the nucleus. Its subcellular location is the nucleoplasm. The protein resides in the sarcolemma. It is found in the postsynaptic cell membrane. In terms of biological role, the dystroglycan complex is involved in a number of processes including laminin and basement membrane assembly, sarcolemmal stability, cell survival, peripheral nerve myelination, nodal structure, cell migration, and epithelial polarization. Functionally, extracellular peripheral glycoprotein that acts as a receptor for extracellular matrix proteins containing laminin-G domains, and for certain adenoviruses. Receptor for laminin-2 (LAMA2) and agrin in peripheral nerve Schwann cells. Also acts as a receptor for laminin LAMA5. Its function is as follows. Transmembrane protein that plays important roles in connecting the extracellular matrix to the cytoskeleton. Acts as a cell adhesion receptor in both muscle and non-muscle tissues. Receptor for both DMD and UTRN and, through these interactions, scaffolds axin to the cytoskeleton. Also functions in cell adhesion-mediated signaling and implicated in cell polarity. In Mus musculus (Mouse), this protein is Dystroglycan 1.